A 196-amino-acid chain; its full sequence is CASP-like protein 2A2 (196 aa).

Residues 1–26 (MAQGKESVSVVEMEGSGNGPAVEMRH) are Cytoplasmic-facing. Residues 27 to 47 (FETLFRLLPVGLCISALVLML) traverse the membrane as a helical segment. The Extracellular portion of the chain corresponds to 48 to 68 (KSEQSDQYMQLDYSNVDAFRC). Residues 69 to 89 (LAYANGICAGYSLISAFDSMV) form a helical membrane-spanning segment. Over 90–98 (PVSHHISRS) the chain is Cytoplasmic. The chain crosses the membrane as a helical span at residues 99-119 (WILFLLDQGITYLMLAGGAVA). Topologically, residues 120–148 (TQVLYVAYKGDEKATWEQICGSYGRFCNR) are extracellular. Residues 149-169 (AGASVIISFFALVCFLLLSLL) form a helical membrane-spanning segment. Residues 170–196 (SAYRLFSKYDPPIHGGAKLEDQTTAQI) lie on the Cytoplasmic side of the membrane.

Belongs to the Casparian strip membrane proteins (CASP) family. In terms of assembly, homodimer and heterodimers.

Its subcellular location is the cell membrane. The chain is CASP-like protein 2A2 from Picea sitchensis (Sitka spruce).